Reading from the N-terminus, the 300-residue chain is tRNA dimethylallyltransferase (300 aa).

18 to 25 (GPTATGKS) is an ATP binding site. Residue 20–25 (TATGKS) coordinates substrate. Residues 43–46 (DSRQ) form an interaction with substrate tRNA region.

This sequence belongs to the IPP transferase family. In terms of assembly, monomer. Mg(2+) is required as a cofactor.

The catalysed reaction is adenosine(37) in tRNA + dimethylallyl diphosphate = N(6)-dimethylallyladenosine(37) in tRNA + diphosphate. Its function is as follows. Catalyzes the transfer of a dimethylallyl group onto the adenine at position 37 in tRNAs that read codons beginning with uridine, leading to the formation of N6-(dimethylallyl)adenosine (i(6)A). This chain is tRNA dimethylallyltransferase, found in Cyanothece sp. (strain PCC 7425 / ATCC 29141).